The following is a 512-amino-acid chain: 2,3-bisphosphoglycerate-independent phosphoglycerate mutase (512 aa).

Positions 11 and 61 each coordinate Mn(2+). The active-site Phosphoserine intermediate is the S61. Substrate-binding positions include H122, 152–153, R184, R190, 259–262, and K332; these read RD and RADR. D399, H403, D440, H441, and H459 together coordinate Mn(2+).

It belongs to the BPG-independent phosphoglycerate mutase family. As to quaternary structure, monomer. Mn(2+) is required as a cofactor.

It carries out the reaction (2R)-2-phosphoglycerate = (2R)-3-phosphoglycerate. It functions in the pathway carbohydrate degradation; glycolysis; pyruvate from D-glyceraldehyde 3-phosphate: step 3/5. Catalyzes the interconversion of 2-phosphoglycerate and 3-phosphoglycerate. This Francisella tularensis subsp. novicida (strain U112) protein is 2,3-bisphosphoglycerate-independent phosphoglycerate mutase.